A 179-amino-acid chain; its full sequence is MADLITVARPYAEALYGLAKESGQEQAWADALQALAAMIADVQAQAFLTDPERADAEKVSLLSAVPVAVDVKAWKAFLALLIHNDRWPATAEIGTLFADAMRRAEGVVDVLVTSAIALDAGQKTAVQSALERRFAGHKVAFREAVDAALIGGLVIHTGDLTIDASVRGQVQQLARTLRS.

Belongs to the ATPase delta chain family. F-type ATPases have 2 components, F(1) - the catalytic core - and F(0) - the membrane proton channel. F(1) has five subunits: alpha(3), beta(3), gamma(1), delta(1), epsilon(1). F(0) has three main subunits: a(1), b(2) and c(10-14). The alpha and beta chains form an alternating ring which encloses part of the gamma chain. F(1) is attached to F(0) by a central stalk formed by the gamma and epsilon chains, while a peripheral stalk is formed by the delta and b chains.

The protein localises to the cell inner membrane. Functionally, f(1)F(0) ATP synthase produces ATP from ADP in the presence of a proton or sodium gradient. F-type ATPases consist of two structural domains, F(1) containing the extramembraneous catalytic core and F(0) containing the membrane proton channel, linked together by a central stalk and a peripheral stalk. During catalysis, ATP synthesis in the catalytic domain of F(1) is coupled via a rotary mechanism of the central stalk subunits to proton translocation. Its function is as follows. This protein is part of the stalk that links CF(0) to CF(1). It either transmits conformational changes from CF(0) to CF(1) or is implicated in proton conduction. This is ATP synthase subunit delta from Acidithiobacillus ferrooxidans (strain ATCC 23270 / DSM 14882 / CIP 104768 / NCIMB 8455) (Ferrobacillus ferrooxidans (strain ATCC 23270)).